The following is a 275-amino-acid chain: MTRFTSIGLCAVLLFNVCSCATLQKDTIASMLKKGNSPRVTRQRRQLPSPCGSLQPGQLCCDSYKYNPVTHLCCNDNPAVKPASPTAIPGCCDQSAYDRNTHLCCDATLSPHPPATTLPACCGPVVYDSSVNSTQLCCAGAVLNKPVGVPRALCCGTATYNPATQVCCMGFPVPKAGGPNATSLCCGPFSYDISTQMCCNGNIALKSATHTHCCGMFSFNPATHLCCNGYPYPKLGFISPSCCGSLVYDTLTMRCCDGSHVVLITPNQDPCANLA.

Positions 1–20 are cleaved as a signal peptide; sequence MTRFTSIGLCAVLLFNVCSC.

Component of the acid-insoluble and acid-soluble organic matrix of the aragonitic skeleton (at protein level).

It is found in the secreted. In Acropora millepora (Staghorn coral), this protein is Galaxin-2.